The primary structure comprises 322 residues: Labrum-interacting protein from saliva LIPS-2 (322 aa).

The N-terminal stretch at 1–20 (MKTSLPIVVLLTAVISGVHP) is a signal peptide. The cysteines at positions 27 and 62 are disulfide-linked. 2 N-linked (GlcNAc...) asparagine glycosylation sites follow: N168 and N175. C249 and C295 are joined by a disulfide.

As to quaternary structure, monomer in solution. Interacts (via the N-terminal domain) with cuticular protein Cp19 (via the C-terminus). Post-translationally, proteolytically cleaved by human mast cell tryptase and chymase. In terms of processing, glycosylated. Female salivary gland (at protein level). Female saliva (at protein level).

It is found in the secreted. Salivary protein that promotes mosquito blood feeding on the vertebrate host by inducing morphological changes in the mosquito labrum. Interacts with the mosquito labrum end tip and triggers salivation and probing. Modulates enzymatic activities of human tryptase and chymase. This chain is Labrum-interacting protein from saliva LIPS-2, found in Aedes albopictus (Asian tiger mosquito).